Reading from the N-terminus, the 264-residue chain is tRNA (guanine-N(1)-)-methyltransferase (264 aa).

Residues glycine 125 and 145 to 150 each bind S-adenosyl-L-methionine; that span reads LGDFVL.

Belongs to the RNA methyltransferase TrmD family. Homodimer.

The protein localises to the cytoplasm. The enzyme catalyses guanosine(37) in tRNA + S-adenosyl-L-methionine = N(1)-methylguanosine(37) in tRNA + S-adenosyl-L-homocysteine + H(+). Specifically methylates guanosine-37 in various tRNAs. The polypeptide is tRNA (guanine-N(1)-)-methyltransferase (Burkholderia cenocepacia (strain ATCC BAA-245 / DSM 16553 / LMG 16656 / NCTC 13227 / J2315 / CF5610) (Burkholderia cepacia (strain J2315))).